The primary structure comprises 101 residues: Putative membrane protein insertion efficiency factor (101 aa).

This sequence belongs to the UPF0161 family.

Its subcellular location is the cell membrane. Could be involved in insertion of integral membrane proteins into the membrane. This chain is Putative membrane protein insertion efficiency factor, found in Lacticaseibacillus casei (strain BL23) (Lactobacillus casei).